We begin with the raw amino-acid sequence, 427 residues long: MKTQIQAIHAREILDSRGNPTVEVDVTLECGAMGRASVPSGASTGAHEAVELRDKDTQRYSGKGVLKAVSNVNTEILESLRGMNAIDQEQIDHLMIKLDGTSDKSRLGGNAILGVSLAVARAAASALNLPLFQYLGGEQAARMPVPMFNILNGGVHANWQGPDFQEFMIAPTGAGSFKEALRWGSEVYHELKAVLKDAGYSTAVGDEGGFAPALKKNSDAIELIIKAIERAGYTPGSQIEIAIDPASSGFYENGLYHLRSEGRKVDAQELINLYSSWVDKYPIAVLEDGLAEDDWSGWKLLNAALGDRIELVGDDLFVTNVERIQRGITENVANAVLIKPNQIGTLTETKAAIEMAYGANWGAMVSHRSGETVDSSIADLTVAMGTGHLKTGAPCRGERVEKYNQFLRIEEDLGSRAFYAGHDAFVR.

Residue Q165 coordinates (2R)-2-phosphoglycerate. The Proton donor role is filled by E207. Mg(2+)-binding residues include D244, E287, and D314. Residues K339, R368, S369, and K390 each coordinate (2R)-2-phosphoglycerate. The Proton acceptor role is filled by K339.

Belongs to the enolase family. In terms of assembly, component of the RNA degradosome, a multiprotein complex involved in RNA processing and mRNA degradation. It depends on Mg(2+) as a cofactor.

Its subcellular location is the cytoplasm. It is found in the secreted. The protein resides in the cell surface. The enzyme catalyses (2R)-2-phosphoglycerate = phosphoenolpyruvate + H2O. It functions in the pathway carbohydrate degradation; glycolysis; pyruvate from D-glyceraldehyde 3-phosphate: step 4/5. Its function is as follows. Catalyzes the reversible conversion of 2-phosphoglycerate (2-PG) into phosphoenolpyruvate (PEP). It is essential for the degradation of carbohydrates via glycolysis. This chain is Enolase 2, found in Pseudomonas syringae pv. syringae (strain B728a).